The following is a 426-amino-acid chain: Serine hydroxymethyltransferase (426 aa).

Residues Leu-113 and 117-119 each bind (6S)-5,6,7,8-tetrahydrofolate; that span reads GHL. At Lys-222 the chain carries N6-(pyridoxal phosphate)lysine. Position 363 to 365 (363 to 365) interacts with (6S)-5,6,7,8-tetrahydrofolate; that stretch reads SAF.

Belongs to the SHMT family. Homodimer. Pyridoxal 5'-phosphate serves as cofactor.

Its subcellular location is the cytoplasm. The catalysed reaction is (6R)-5,10-methylene-5,6,7,8-tetrahydrofolate + glycine + H2O = (6S)-5,6,7,8-tetrahydrofolate + L-serine. The protein operates within one-carbon metabolism; tetrahydrofolate interconversion. It functions in the pathway amino-acid biosynthesis; glycine biosynthesis; glycine from L-serine: step 1/1. Functionally, catalyzes the reversible interconversion of serine and glycine with tetrahydrofolate (THF) serving as the one-carbon carrier. This reaction serves as the major source of one-carbon groups required for the biosynthesis of purines, thymidylate, methionine, and other important biomolecules. Also exhibits THF-independent aldolase activity toward beta-hydroxyamino acids, producing glycine and aldehydes, via a retro-aldol mechanism. In Phocaeicola vulgatus (strain ATCC 8482 / DSM 1447 / JCM 5826 / CCUG 4940 / NBRC 14291 / NCTC 11154) (Bacteroides vulgatus), this protein is Serine hydroxymethyltransferase.